We begin with the raw amino-acid sequence, 292 residues long: Transmembrane and ubiquitin-like domain-containing protein 1 (292 aa).

The helical transmembrane segment at 11–31 (VTLLFGVVFLVLVLVLAWAST) threads the bilayer. The tract at residues 34–143 (VEPPEHLLSP…TQPSAEDAAS (110 aa)) is disordered. The span at 71-80 (VRDEDDKSEP) shows a compositional bias: basic and acidic residues. The segment covering 84–94 (AGAAGQSADGS) has biased composition (low complexity). One can recognise a Ubiquitin-like domain in the interval 149–222 (MVLRLKFLND…LHCHISQHAT (74 aa)). The next 2 helical transmembrane spans lie at 237–257 (VALN…SVLW) and 269–289 (APAT…AFGV).

The protein resides in the membrane. The protein localises to the cytoplasm. It is found in the nucleus. In terms of biological role, may contribute to the regulation of translation during cell-cycle progression. May contribute to the regulation of cell proliferation. The membrane form is involved in sterol-regulated ubiquitination and degradation of HMG-CoA reductase HMGCR. May be involved in centrosome assembly. In Danio rerio (Zebrafish), this protein is Transmembrane and ubiquitin-like domain-containing protein 1 (tmub1).